The chain runs to 992 residues: Leucine-rich repeat receptor-like serine/threonine-protein kinase BAM3 (992 aa).

The first 21 residues, 1–21 (MADKIFTFFLILSSISPLLCS), serve as a signal peptide directing secretion. The Extracellular segment spans residues 22-656 (SLISPLNLSL…ARSRGEISAK (635 aa)). A glycan (N-linked (GlcNAc...) asparagine) is linked at asparagine 28. The cysteines at positions 64 and 71 are disulfide-linked. N-linked (GlcNAc...) asparagine glycosylation is found at asparagine 75 and asparagine 87. LRR repeat units lie at residues 75 to 99 (NQSI…ISRL), 100 to 124 (SPSL…IYEL), 126 to 148 (GLEV…GFSQ), 150 to 173 (TQLV…LTTL), 174 to 199 (TRLE…SFLS), and 201 to 221 (KFLS…LANI). 2 N-linked (GlcNAc...) asparagine glycosylation sites follow: asparagine 131 and asparagine 163. The N-linked (GlcNAc...) asparagine glycan is linked to asparagine 220. Residues 226–231 (QLYLGY) carry the CLE45 peptide binding motif. LRR repeat units lie at residues 246–270 (LINL…LGNL), 271–294 (KNLE…LGNM), 296–320 (SLKT…GLQK), 322–342 (QLFN…VSEL), 343–366 (PDLQ…LGSN), 368–391 (NLIE…CFGR), 393–414 (LKIL…LGQC), 415–438 (EPLW…LIYL), 439–462 (PNLS…EAGN), 465–489 (FSSL…IRNL), 491–513 (SLQI…IGSL), 514–536 (KSLL…EFGD), 537–561 (CMSL…ISQI), 563–585 (ILNY…LGYM), and 586–610 (KSLT…QFSY). N-linked (GlcNAc...) asparagine glycosylation is found at asparagine 256 and asparagine 293. The N-linked (GlcNAc...) asparagine glycan is linked to asparagine 354. 2 N-linked (GlcNAc...) asparagine glycosylation sites follow: asparagine 440 and asparagine 472. Asparagine 525 carries an N-linked (GlcNAc...) asparagine glycan. Asparagine 568, asparagine 575, asparagine 597, asparagine 613, asparagine 631, and asparagine 635 each carry an N-linked (GlcNAc...) asparagine glycan. Residues 657 to 677 (FKLFFGLGLLGFFLVFVVLAV) form a helical membrane-spanning segment. At 678 to 992 (VKNRRMRKNN…ISQAKQPNTF (315 aa)) the chain is on the cytoplasmic side. Residues 710 to 992 (VKENHVIGKG…ISQAKQPNTF (283 aa)) form the Protein kinase domain. Residues 716-724 (IGKGGRGIV) and lysine 738 contribute to the ATP site. Aspartate 836 acts as the Proton acceptor in catalysis.

It belongs to the protein kinase superfamily. Ser/Thr protein kinase family. Interacts with CLE45, especially in roots. Binds to the dimer CLV2/CRN. In terms of tissue distribution, expressed in seedlings, roots, leaves, stems, inflorescences, flowers and siliques. In roots, confined to protophloem and sieve element precursor cells.

It is found in the cell membrane. It localises to the endoplasmic reticulum membrane. It carries out the reaction L-seryl-[protein] + ATP = O-phospho-L-seryl-[protein] + ADP + H(+). The enzyme catalyses L-threonyl-[protein] + ATP = O-phospho-L-threonyl-[protein] + ADP + H(+). Its function is as follows. Necessary for male gametophyte development, as well as ovule specification and function. Required for the development of high-ordered vascular strands within the leaf and a correlated control of leaf shape, size and symmetry. LRR-rich receptor-like kinase (LRR-RLK) involved in the perception of CLE45 peptide ligand which mediates root growth inhibition by repressing protophloem differentiation; this mechanism requires CRN. BRX, BAM3, and CLE45 act together to regulate the transition of protophloem cells from proliferation to differentiation, thus impinging on postembryonic growth capacity of the root meristem. Necessary for CLE45 peptide-triggered accumulation of MAKR5 in developing sieve elements. The sequence is that of Leucine-rich repeat receptor-like serine/threonine-protein kinase BAM3 from Arabidopsis thaliana (Mouse-ear cress).